The sequence spans 235 residues: UPF0749 protein YlxX (235 aa).

Residues 6–26 traverse the membrane as a helical segment; the sequence is SFISISVLMVIFGLMISVQFN.

Belongs to the UPF0749 family.

It localises to the cell membrane. The sequence is that of UPF0749 protein YlxX (ylxX) from Bacillus subtilis (strain 168).